Reading from the N-terminus, the 202-residue chain is Glycerol-3-phosphate acyltransferase (202 aa).

A run of 4 helical transmembrane segments spans residues 2–22 (ANLLFALAAYLIGSVSFAVVV), 80–100 (LNETGLAMVALAVFLGHLFPV), 119–139 (AIDPILGLGTLATWLIIAFFF), and 158–178 (VLMNGVDVMTGAIFVISVLLI).

Belongs to the PlsY family. In terms of assembly, probably interacts with PlsX.

Its subcellular location is the cell inner membrane. The enzyme catalyses an acyl phosphate + sn-glycerol 3-phosphate = a 1-acyl-sn-glycero-3-phosphate + phosphate. The protein operates within lipid metabolism; phospholipid metabolism. Functionally, catalyzes the transfer of an acyl group from acyl-phosphate (acyl-PO(4)) to glycerol-3-phosphate (G3P) to form lysophosphatidic acid (LPA). This enzyme utilizes acyl-phosphate as fatty acyl donor, but not acyl-CoA or acyl-ACP. The sequence is that of Glycerol-3-phosphate acyltransferase from Cupriavidus necator (strain ATCC 17699 / DSM 428 / KCTC 22496 / NCIMB 10442 / H16 / Stanier 337) (Ralstonia eutropha).